The sequence spans 126 residues: MPTIQQLVRSRRIQIKKKTKSPALVNCPQRRGVCTRVYTTTPKKPNSAIRKVARVRLTSDLKVTAYIPGIGHNLQEHSVVLIRGGRVKDLPGVRYHIIRGALDSVGVKDRTQGRSKYGVKKPKSDK.

Belongs to the universal ribosomal protein uS12 family. In terms of assembly, part of the 30S ribosomal subunit.

Its subcellular location is the plastid. It is found in the chloroplast. Its function is as follows. With S4 and S5 plays an important role in translational accuracy. Located at the interface of the 30S and 50S subunits. This chain is Small ribosomal subunit protein uS12c (rps12), found in Trieres chinensis (Marine centric diatom).